A 598-amino-acid polypeptide reads, in one-letter code: Probable translation initiation factor IF-2 (598 aa).

In terms of domain architecture, tr-type G spans 3–225 (LRCPIVSVLG…GLAQKFLEQK (223 aa)). The interval 12–19 (GHVDHGKT) is G1. 12 to 19 (GHVDHGKT) serves as a coordination point for GTP. The tract at residues 37 to 41 (GITQH) is G2. Residues 76-79 (DTPG) are G3. Residues 76 to 80 (DTPGH) and 130 to 133 (NKVD) each bind GTP. The segment at 130 to 133 (NKVD) is G4. The G5 stretch occupies residues 200 to 202 (SAM).

It belongs to the TRAFAC class translation factor GTPase superfamily. Classic translation factor GTPase family. IF-2 subfamily.

Functionally, function in general translation initiation by promoting the binding of the formylmethionine-tRNA to ribosomes. Seems to function along with eIF-2. This is Probable translation initiation factor IF-2 from Methanococcus maripaludis (strain C7 / ATCC BAA-1331).